Reading from the N-terminus, the 463-residue chain is A-type ATP synthase subunit B (463 aa).

It belongs to the ATPase alpha/beta chains family. In terms of assembly, has multiple subunits with at least A(3), B(3), C, D, E, F, H, I and proteolipid K(x).

The protein localises to the cell membrane. Functionally, component of the A-type ATP synthase that produces ATP from ADP in the presence of a proton gradient across the membrane. The B chain is a regulatory subunit. This is A-type ATP synthase subunit B from Thermococcus gammatolerans (strain DSM 15229 / JCM 11827 / EJ3).